A 479-amino-acid chain; its full sequence is UDP-N-acetylmuramoyl-L-alanyl-D-glutamate--2,6-diaminopimelate ligase (479 aa).

Residue S21 participates in UDP-N-acetyl-alpha-D-muramoyl-L-alanyl-D-glutamate binding. G98–S104 is a binding site for ATP. Residues T144–T145, S171, Q177, and R179 contribute to the UDP-N-acetyl-alpha-D-muramoyl-L-alanyl-D-glutamate site. K211 is subject to N6-carboxylysine. Meso-2,6-diaminopimelate is bound by residues R372, D396–R399, G446, and E450. The Meso-diaminopimelate recognition motif signature appears at D396–R399.

The protein belongs to the MurCDEF family. MurE subfamily. Mg(2+) is required as a cofactor. Post-translationally, carboxylation is probably crucial for Mg(2+) binding and, consequently, for the gamma-phosphate positioning of ATP.

The protein localises to the cytoplasm. It catalyses the reaction UDP-N-acetyl-alpha-D-muramoyl-L-alanyl-D-glutamate + meso-2,6-diaminopimelate + ATP = UDP-N-acetyl-alpha-D-muramoyl-L-alanyl-gamma-D-glutamyl-meso-2,6-diaminopimelate + ADP + phosphate + H(+). It participates in cell wall biogenesis; peptidoglycan biosynthesis. In terms of biological role, catalyzes the addition of meso-diaminopimelic acid to the nucleotide precursor UDP-N-acetylmuramoyl-L-alanyl-D-glutamate (UMAG) in the biosynthesis of bacterial cell-wall peptidoglycan. The sequence is that of UDP-N-acetylmuramoyl-L-alanyl-D-glutamate--2,6-diaminopimelate ligase from Rickettsia rickettsii.